The chain runs to 2046 residues: Protein TIC 214 (2046 aa).

6 helical membrane-spanning segments follow: residues 18 to 38 (VSGPIILFGLYYGFIATLPFG), 54 to 74 (LYGIIAISGSITGQLIVFLSM), 79 to 99 (IYAALWKPHAITLLVIPYTFC), 125 to 145 (ILSLFMGGLILQLLNPILLAN), 163 to 183 (ISFMISSFCGWLGGHILFINL), and 214 to 234 (TFSVLLISYFSFYLGRSPLIF). Disordered stretches follow at residues 278-299 (DEDRSVAMAKKGRSVAEDEDRS), 320-472 (ARSV…VPRE), and 1833-1898 (AKDS…EDEI). 3 stretches are compositionally biased toward basic and acidic residues: residues 322-335 (SVAEDKDPEDEHRS), 344-368 (SVAEDKDPEDEHRSVAMAKKDRSVA), and 378-457 (AKKD…RSVA). Residues 1833–1866 (AKDSNANDINAKDSNANDINANDSNAKDSNANDI) show a composition bias toward low complexity. The segment covering 1882 to 1898 (NAKDSNADVPKKKEDEI) has biased composition (basic and acidic residues).

This sequence belongs to the TIC214 family. Part of the Tic complex.

It localises to the plastid. The protein localises to the chloroplast inner membrane. Involved in protein precursor import into chloroplasts. May be part of an intermediate translocation complex acting as a protein-conducting channel at the inner envelope. The protein is Protein TIC 214 of Pinus koraiensis (Korean pine).